Here is a 240-residue protein sequence, read N- to C-terminus: Cysteine-rich venom protein (240 aa).

Residues 1-19 (MIAFIVLPILAAVLQQSSG) form the signal peptide. Residues 39-166 (DLHNSLRRSV…EYSYFYVCQY (128 aa)) enclose the SCP domain. 8 disulfides stabilise this stretch: Cys-75/Cys-153, Cys-92/Cys-167, Cys-148/Cys-164, Cys-186/Cys-193, Cys-189/Cys-198, Cys-202/Cys-235, Cys-211/Cys-229, and Cys-220/Cys-233. The ShKT domain maps to 202 to 235 (CRQENKFTNCDSLVRQSSCQDNYMKTNCPASCFC).

The protein belongs to the CRISP family. In terms of tissue distribution, expressed by the venom gland.

It is found in the secreted. In terms of biological role, blocks contraction of smooth muscle elicited by high potassium-induced depolarization, but does not block caffeine-stimulated contraction. May target voltage-gated calcium channels on smooth muscle. The polypeptide is Cysteine-rich venom protein (Protobothrops jerdonii (Jerdon's pitviper)).